We begin with the raw amino-acid sequence, 312 residues long: Olfactory receptor 1F1 (312 aa).

Residues 1 to 25 (MSGTNQSSVSEFLLLGLSRQPQQQH) lie on the Extracellular side of the membrane. Asn-5 carries N-linked (GlcNAc...) asparagine glycosylation. The helical transmembrane segment at 26–49 (LLFVFFLSMYLATVLGNLLIILSV) threads the bilayer. Residues 50–57 (SIDSCLHT) lie on the Cytoplasmic side of the membrane. A helical membrane pass occupies residues 58 to 79 (PMYFFLSNLSFVDICFSFTTVP). Over 80–100 (KMLANHILETQTISFCGCLTQ) the chain is Extracellular. Cys-97 and Cys-189 are oxidised to a cystine. A helical transmembrane segment spans residues 101–120 (MYFVFMFVDMDNFLLAVMAY). At 121-139 (DHFVAVCHPLHYTAKMTHQ) the chain is on the cytoplasmic side. A helical transmembrane segment spans residues 140–158 (LCALLVAGLWVVANLNVLL). At 159–196 (HTLLMAPLSFCADNAITHFFCDVTPLLKLSCSDTHLNE) the chain is on the extracellular side. The helical transmembrane segment at 197-219 (VIILSEGALVMITPFLCILASYM) threads the bilayer. Residues 220-236 (HITCTVLKVPSTKGRWK) are Cytoplasmic-facing. The chain crosses the membrane as a helical span at residues 237–259 (AFSTCGSHLAVVLLFYSTIIAVY). Topologically, residues 260–272 (FNPLSSHSAEKDT) are extracellular. The helical transmembrane segment at 273 to 292 (MATVLYTVVTPMLNPFIYSL) threads the bilayer. Residues 293–312 (RNRYLKGALKKVVGRVVFSV) lie on the Cytoplasmic side of the membrane.

Belongs to the G-protein coupled receptor 1 family.

It localises to the cell membrane. Its function is as follows. Odorant receptor. The protein is Olfactory receptor 1F1 (OR1F1) of Homo sapiens (Human).